The sequence spans 928 residues: Diacylglycerol kinase zeta (928 aa).

A compositionally biased stretch (basic and acidic residues) spans 1 to 14 (MEPRDGSPEARSSD). 2 disordered regions span residues 1 to 46 (MEPR…RRFP) and 59 to 82 (KSGLQHLAPPPPTPGAPCSESERQ). Positions 15–24 (SESASASSSG) are enriched in low complexity. A compositionally biased stretch (basic and acidic residues) spans 25–37 (SERDAGPEPDKAP). 2 consecutive Phorbol-ester/DAG-type zinc fingers follow at residues 98 to 152 (HIWF…NFRC) and 172 to 230 (HHWV…EEPC). The segment at 251-280 (PQNTLKASKKKKRASFKRKSSKKGPEEGRW) is disordered. The span at 257-272 (ASKKKKRASFKRKSSK) shows a compositional bias: basic residues. Residues 259–273 (KKKKRASFKRKSSKK) are MARCKS homology. The mediates interaction with RASGRP1 stretch occupies residues 278–416 (GRWRPFIIRP…HVEEGNVVQL (139 aa)). The 135-residue stretch at 291–425 (PLMKPLLVFV…LDRWDLHAEP (135 aa)) folds into the DAGKc domain. A Nuclear export signal motif is present at residues 361 to 369 (LSTLDQLRL). Ser705 is subject to Phosphoserine. Positions 759-788 (ARPDLPTPTSPLPTSPCSPTPRSLQGDAAP) are disordered. Positions 763-777 (LPTPTSPLPTSPCSP) are enriched in pro residues. At Ser781 the chain carries Phosphoserine. ANK repeat units lie at residues 822-852 (QSRTLLHHAVSTGSKDVVRYLLDHAPPEILD) and 857-886 (NGETCLHQAAALGQRTICHYIVEAGASLMK). The short motif at 924–928 (QETAV) is the PDZ-binding element.

This sequence belongs to the eukaryotic diacylglycerol kinase family. As to quaternary structure, interacts (via PDZ-binding motif) with the PDZ domain of the syntrophin SNTG1 and that of SNX27. Interacts with IRS1 in the absence of insulin; insulin stimulation decreases this interaction. Found in a ternary complex with IRS1 and PIP5K1A in the absence of insulin. Interacts with PIP5K1A. In terms of assembly, forms a signaling complex with RASGRP1 and HRAS. Phosphorylation of the MARCKS homology domain by PKC reduces nuclear accumulation of DGK-zeta. As to expression, highest levels in brain, and substantial levels in skeletal muscle, heart, and pancreas. In terms of tissue distribution, predominantly expressed in muscle.

The protein resides in the nucleus. It is found in the cytoplasm. The protein localises to the cytosol. Its subcellular location is the cell membrane. It localises to the cell projection. The protein resides in the lamellipodium. It catalyses the reaction a 1,2-diacyl-sn-glycerol + ATP = a 1,2-diacyl-sn-glycero-3-phosphate + ADP + H(+). The enzyme catalyses a 1-O-alkyl-sn-glycerol + ATP = a 1-O-alkyl-sn-glycero-3-phosphate + ADP + H(+). It carries out the reaction 1-O-alkyl-2-acyl-sn-glycerol + ATP = 1-O-alkyl-2-acyl-sn-glycero-3-phosphate + ADP + H(+). The catalysed reaction is 1,2-didecanoyl-sn-glycerol + ATP = 1,2-didecanoyl-sn-glycero-3-phosphate + ADP + H(+). It catalyses the reaction 1,2-ditetradecanoyl-sn-glycerol + ATP = 1,2-ditetradecanoyl-sn-glycero-3-phosphate + ADP + H(+). The enzyme catalyses 1-hexadecanoyl-2-(9Z-octadecenoyl)-sn-glycerol + ATP = 1-hexadecanoyl-2-(9Z-octadecenoyl)-sn-glycero-3-phosphate + ADP + H(+). It carries out the reaction 1-hexadecanoyl-2-(5Z,8Z,11Z,14Z-eicosatetraenoyl)-sn-glycerol + ATP = 1-hexadecanoyl-2-(5Z,8Z,11Z,14Z-eicosatetraenoyl)-sn-glycero-3-phosphate + ADP + H(+). The catalysed reaction is 1-octadecanoyl-2-(9Z-octadecenoyl)-sn-glycerol + ATP = 1-octadecanoyl-2-(9Z-octadecenoyl)-sn-glycero-3-phosphate + ADP + H(+). It catalyses the reaction 1-octadecanoyl-2-(5Z,8Z,11Z,14Z-eicosatetraenoyl)-sn-glycerol + ATP = 1-octadecanoyl-2-(5Z,8Z,11Z,14Z-eicosatetraenoyl)-sn-glycero-3-phosphate + ADP + H(+). The enzyme catalyses 1-octadecanoyl-2-(4Z,7Z,10Z,13Z,16Z,19Z-docosahexaenoyl)-sn-glycerol + ATP = 1-octadecanoyl-2-(4Z,7Z,10Z,13Z,16Z,19Z-docosahexaenoyl)-sn-glycero-3-phosphate + ADP + H(+). It carries out the reaction 1,2-di-(9Z-octadecenoyl)-sn-glycerol + ATP = 1,2-di-(9Z-octadecenoyl)-sn-glycero-3-phosphate + ADP + H(+). The catalysed reaction is 1-(9Z-octadecenoyl)-2-hexadecanoyl-sn-glycerol + ATP = 1-(9Z)-octadecenoyl-2-hexadecanoyl-sn-glycero-3-phosphate + ADP + H(+). It catalyses the reaction 1-eicosanoyl-2-(5Z,8Z,11Z,14Z)-eicosatetraenoyl-sn-glycerol + ATP = 1-eicosanoyl-2-(5Z,8Z,11Z,14Z)-eicosatetraenoyl-sn-glycero-3-phosphate + ADP + H(+). The enzyme catalyses 1,2-di-(5Z,8Z,11Z,14Z)-eicosatetraenoyl-sn-glycerol + ATP = 1,2-di-(5Z,8Z,11Z,14Z)-eicosatetraenoyl-sn-glycero-3-phosphate + ADP + H(+). It carries out the reaction 1-O-hexadecyl-2-acetyl-sn-glycerol + ATP = 1-O-hexadecyl-2-acetyl-sn-glycero-3-phosphate + ADP + H(+). The catalysed reaction is 1-O-hexadecyl-2-(5Z,8Z,11Z,14Z-eicosatetraenoyl)-sn-glycerol + ATP = 1-O-hexadecyl-2-(5Z,8Z,11Z,14Z-eicosatetraenoyl)-sn-glycero-3-phosphate + ADP + H(+). It catalyses the reaction 1-O-hexadecyl-2-(9Z-octadecenoyl)-sn-glycerol + ATP = 1-O-hexadecyl-2-(9Z-octadecenoyl)-sn-glycero-3-phosphate + ADP + H(+). The enzyme catalyses 1-O-hexadecyl-sn-glycerol + ATP = 1-O-hexadecyl-sn-glycero-3-phosphate + ADP + H(+). The protein operates within lipid metabolism; glycerolipid metabolism. Activated by 1,2-diacyl-sn-glycero-3-phosphate/phosphatidic acid irrespective of its acyl chain composition. Diacylglycerol kinase that converts diacylglycerol/DAG into phosphatidic acid/phosphatidate/PA and regulates the respective levels of these two bioactive lipids. Thereby, acts as a central switch between the signaling pathways activated by these second messengers with different cellular targets and opposite effects in numerous biological processes. Also plays an important role in the biosynthesis of complex lipids. Does not exhibit an acyl chain-dependent substrate specificity among diacylglycerol species. Can also phosphorylate 1-alkyl-2-acylglycerol in vitro but less efficiently and with a preference for alkylacylglycerols containing an arachidonoyl group. The biological processes it is involved in include T cell activation since it negatively regulates T-cell receptor signaling which is in part mediated by diacylglycerol. By generating phosphatidic acid, stimulates PIP5KIA activity which regulates actin polymerization. Through the same mechanism could also positively regulate insulin-induced translocation of SLC2A4 to the cell membrane. Its function is as follows. Regulates RASGRP1 activity. Functionally, does not regulate RASGRP1 activity. The polypeptide is Diacylglycerol kinase zeta (Homo sapiens (Human)).